Reading from the N-terminus, the 376-residue chain is MAQKQKCVAMLLAGGKGSRLSALTKNLAKPAVPFGGKYRIIDFTLSNCANSGIETVGILTQYQPLELHNYIGIGNAWDLDRVSGGVTVLPPYAESSGVKWYTGTASAIYQNLNYLSQYEPEYVLILSGDHIYKMDYSKMLDYHIEKEADVSISVIEVPWDEASRFGIMNTNEEMEIVEFEEKPQFPRSNLASMGIYIFNWAILKEYLEMDARNPESSNDFGKDVLPLLLDEGKKLMAYPFEGYWKDVGTVKSLWEANMDLLRDETSLNLNDRNWRIYSVNPNEPPQYIAEKAKVEESLINEGCVIEGDVKHSVLFQGVTVEEGSMVIDSVVMPGAKIGKNVVIERAIVGSEMVIEDGTIIRPEKNVDDVVLIAEGK.

Alpha-D-glucose 1-phosphate-binding positions include tyrosine 101, glycine 166, 181–182, and serine 192; that span reads EK.

It belongs to the bacterial/plant glucose-1-phosphate adenylyltransferase family. As to quaternary structure, homotetramer.

It carries out the reaction alpha-D-glucose 1-phosphate + ATP + H(+) = ADP-alpha-D-glucose + diphosphate. It participates in glycan biosynthesis; glycogen biosynthesis. Functionally, involved in the biosynthesis of ADP-glucose, a building block required for the elongation reactions to produce glycogen. Catalyzes the reaction between ATP and alpha-D-glucose 1-phosphate (G1P) to produce pyrophosphate and ADP-Glc. This chain is Glucose-1-phosphate adenylyltransferase, found in Bacillus cereus (strain ATCC 10987 / NRS 248).